Here is a 209-residue protein sequence, read N- to C-terminus: Uracil phosphoribosyltransferase (209 aa).

5-phospho-alpha-D-ribose 1-diphosphate is bound by residues arginine 79, arginine 104, and 131–139 (DPMLATGAS). Uracil-binding positions include isoleucine 194 and 199 to 201 (GDA). Aspartate 200 provides a ligand contact to 5-phospho-alpha-D-ribose 1-diphosphate.

This sequence belongs to the UPRTase family. Mg(2+) is required as a cofactor.

The enzyme catalyses UMP + diphosphate = 5-phospho-alpha-D-ribose 1-diphosphate + uracil. The protein operates within pyrimidine metabolism; UMP biosynthesis via salvage pathway; UMP from uracil: step 1/1. Its activity is regulated as follows. Allosterically activated by GTP. Its function is as follows. Catalyzes the conversion of uracil and 5-phospho-alpha-D-ribose 1-diphosphate (PRPP) to UMP and diphosphate. The chain is Uracil phosphoribosyltransferase from Staphylococcus epidermidis (strain ATCC 35984 / DSM 28319 / BCRC 17069 / CCUG 31568 / BM 3577 / RP62A).